Reading from the N-terminus, the 315-residue chain is Ester hydrolase C11orf54 homolog (315 aa).

Zn(2+)-binding residues include His-266, His-268, and His-278.

As to quaternary structure, monomer. It depends on Zn(2+) as a cofactor.

The protein localises to the nucleus. It is found in the cytoplasm. In terms of biological role, exhibits ester hydrolase activity on the substrate p-nitrophenyl acetate, in vitro. Regulates DNA damage and repair by regulating HIF1A degradation via chaperone-mediated autophagy (CMA). This is Ester hydrolase C11orf54 homolog from Rattus norvegicus (Rat).